The sequence spans 540 residues: GMP synthase [glutamine-hydrolyzing] (540 aa).

The 194-residue stretch at 29 to 222 folds into the Glutamine amidotransferase type-1 domain; the sequence is KILIVDFGSQ…VRKVAGLTGD (194 aa). C106 acts as the Nucleophile in catalysis. Active-site residues include H196 and E198. Positions 223-415 constitute a GMPS ATP-PPase domain; that stretch reads WTMRAFREEA…LGLPDVFVGR (193 aa). ATP is bound at residue 250-256; that stretch reads SGGVDSA.

Homodimer.

The catalysed reaction is XMP + L-glutamine + ATP + H2O = GMP + L-glutamate + AMP + diphosphate + 2 H(+). It functions in the pathway purine metabolism; GMP biosynthesis; GMP from XMP (L-Gln route): step 1/1. Functionally, catalyzes the synthesis of GMP from XMP. The polypeptide is GMP synthase [glutamine-hydrolyzing] (Rhodopseudomonas palustris (strain ATCC BAA-98 / CGA009)).